The following is a 128-amino-acid chain: Calcitonin gene-related peptide 1 (128 aa).

Residues 1 to 25 form the signal peptide; the sequence is MGFLKFSPFLVVSILLLYQACSLQA. Positions 26-80 are excised as a propeptide; that stretch reads VPLRSILESSPGMATLSEEEVRLLAALVQDYMQMKARELEQEEEQEAEGSSVTAQ. Cysteine 84 and cysteine 89 are joined by a disulfide. At phenylalanine 119 the chain carries Phenylalanine amide. Positions 125–128 are excised as a propeptide; that stretch reads DLQA.

This sequence belongs to the calcitonin family. As to expression, detected in nerve cells of cerebrum, hippocampus and pons/midbrain in newborns, and only in nerve cells of pons/midbrain in adult.

It is found in the secreted. CGRP1/CALCA is a peptide hormone that induces vasodilation mediated by the CALCRL-RAMP1 receptor complex. Dilates a variety of vessels including the coronary, cerebral and systemic vasculature. Its abundance in the CNS also points toward a neurotransmitter or neuromodulator role. It also elevates platelet cAMP. CGRP1 can also bind and activate CALCR-RAMP1 (AMYR1) receptor complex. In Mus musculus (Mouse), this protein is Calcitonin gene-related peptide 1.